Consider the following 876-residue polypeptide: MAAPALSGDQIRETFLKFFEGKGHRRLPSASLIPEDPTVLLTIAGMLPFKPIFLGQQVAEVPRATTSQKCIRTNDIENVGRTARHHTFFEMLGNFSFGDYFKKEAIAFAWELVTEVFQVPAERLAVSVFEEDDEAFAIWRDQIGVPEARIQRLGAKDNFWASGPTGPCGPCSEIYYDFHPELGNDGLDLEDDSRFIEVYNLVFMQYNRDAAGNLTALEKQNIDTGMGLERMAQVLQGVPNNYETDLIFPIIQAVAAIAQRDYASESESVKVSLKVIGDHLRAVTHLIADGVTASNLGRGYVLRRLIRRVVRHGRLIGIDRPFTAEIAETAIALMAAQYPNLREREAAIKAELTREEQRFLETLERGEKLLAELLAAATDQIRGEDAFVLYDTYGFPLELTQEIAEEKGLTVDLAGFEAAMAAQRQRSQAAHETIDLTVQGSLDRLAEQIHPTEFVGYGDAVATAKVTALLREGQSVEAAEAGDRVQIVLDHTPFYAESGGQVGDRGVLTGESLIVRIEDVQKESGFFVHYGQIERGLLQVGDSVTAQIDRACRRRAQANHTATHLLQAALKLIVDEGISQAGSLVAFDRLRFDFNCPRAVTPEELRQIEDQINQWIAEAHGTVVEVMPIATAKAKGAVAMFGEKYGAEVRVIDVPGVSMELCGGTHVANTAEIGLFKIISEAGVASGVRRIEAVAGPAVLEYLNVRDAVVRDLSDRFKAKPEELSDRVTALQEELKANQKQLTALKAELAIAKSDALVSQAIPVGDAQVLVETLTGVDAAALQTAAERLQQKLGDAGAVVLGSSPEEGKVTLVAAFGPAIIAKGLKAGQFIGGIAKICGGGGGGRPNLAQAGGRDASKLPEAIAAALDQLKTAIAS.

Zn(2+)-binding residues include H560, H564, C662, and H666.

It belongs to the class-II aminoacyl-tRNA synthetase family. It depends on Zn(2+) as a cofactor.

Its subcellular location is the cytoplasm. The enzyme catalyses tRNA(Ala) + L-alanine + ATP = L-alanyl-tRNA(Ala) + AMP + diphosphate. Catalyzes the attachment of alanine to tRNA(Ala) in a two-step reaction: alanine is first activated by ATP to form Ala-AMP and then transferred to the acceptor end of tRNA(Ala). Also edits incorrectly charged Ser-tRNA(Ala) and Gly-tRNA(Ala) via its editing domain. The protein is Alanine--tRNA ligase of Synechococcus elongatus (strain ATCC 33912 / PCC 7942 / FACHB-805) (Anacystis nidulans R2).